We begin with the raw amino-acid sequence, 337 residues long: Eukaryotic translation initiation factor 3 subunit I (337 aa).

WD repeat units follow at residues 8 to 47 (GHER…RLGT), 50 to 91 (GHQG…KVWD), 147 to 186 (CTES…QLEN), 191 to 230 (EFDH…ILKT), and 288 to 327 (GHFG…FDFM).

It belongs to the eIF-3 subunit I family. In terms of assembly, component of the eukaryotic translation initiation factor 3 (eIF-3) complex.

It is found in the cytoplasm. Functionally, component of the eukaryotic translation initiation factor 3 (eIF-3) complex, which is involved in protein synthesis of a specialized repertoire of mRNAs and, together with other initiation factors, stimulates binding of mRNA and methionyl-tRNAi to the 40S ribosome. The eIF-3 complex specifically targets and initiates translation of a subset of mRNAs involved in cell proliferation. This chain is Eukaryotic translation initiation factor 3 subunit I (tif34), found in Aspergillus niger (strain ATCC MYA-4892 / CBS 513.88 / FGSC A1513).